The sequence spans 310 residues: HPr kinase/phosphorylase (310 aa).

Residues His-138 and Lys-159 contribute to the active site. 153-160 (GKSGVGKS) provides a ligand contact to ATP. Ser-160 is a binding site for Mg(2+). Asp-177 (proton acceptor; for phosphorylation activity. Proton donor; for dephosphorylation activity) is an active-site residue. The interval 201 to 210 (LEIRGLGIIN) is important for the catalytic mechanism of both phosphorylation and dephosphorylation. Glu-202 contacts Mg(2+). The active site involves Arg-243. Positions 264–269 (PVRPGR) are important for the catalytic mechanism of dephosphorylation.

Belongs to the HPrK/P family. In terms of assembly, homohexamer. The cofactor is Mg(2+).

It carries out the reaction [HPr protein]-L-serine + ATP = [HPr protein]-O-phospho-L-serine + ADP + H(+). The enzyme catalyses [HPr protein]-O-phospho-L-serine + phosphate + H(+) = [HPr protein]-L-serine + diphosphate. Catalyzes the ATP- as well as the pyrophosphate-dependent phosphorylation of a specific serine residue in HPr, a phosphocarrier protein of the phosphoenolpyruvate-dependent sugar phosphotransferase system (PTS). HprK/P also catalyzes the pyrophosphate-producing, inorganic phosphate-dependent dephosphorylation (phosphorolysis) of seryl-phosphorylated HPr (P-Ser-HPr). The two antagonistic activities of HprK/P are regulated by several intracellular metabolites, which change their concentration in response to the absence or presence of rapidly metabolisable carbon sources (glucose, fructose, etc.) in the growth medium. Also phosphorylates/dephosphorylates the HPr-like catabolite repression protein crh on a specific serine residue. Therefore, by controlling the phosphorylation state of HPr and crh, HPrK/P is a sensor enzyme that plays a major role in the regulation of carbon metabolism and sugar transport: it mediates carbon catabolite repression (CCR), and regulates PTS-catalyzed carbohydrate uptake and inducer exclusion. This Bacillus licheniformis (strain ATCC 14580 / DSM 13 / JCM 2505 / CCUG 7422 / NBRC 12200 / NCIMB 9375 / NCTC 10341 / NRRL NRS-1264 / Gibson 46) protein is HPr kinase/phosphorylase.